The primary structure comprises 91 residues: Potassium channel toxin TtrKIK (91 aa).

Positions 1-25 are cleaved as a signal peptide; that stretch reads MVATNRCCVFALLFALLLVHSLTEA. Positions 26-44 are excised as a propeptide; that stretch reads GKGKEVLGKIKDKLIEAKD. Residues 58–91 enclose the BetaSPN-type CS-alpha/beta domain; sequence EYACPAIEKFCEDHCAAKKAVGKCDDFKCNCIKL. 3 disulfide bridges follow: Cys-61/Cys-81, Cys-68/Cys-86, and Cys-72/Cys-88.

The protein belongs to the long chain scorpion toxin family. Class 2 subfamily. Expressed by the venom gland.

It localises to the secreted. Functionally, the full peptide presents antibacterial and cytotoxic activities. The synthetic C-terminus (AA 33-76) inhibits voltage-gated potassium channels Kv1.1/KCNA1, Kv1.2/KCNA2, and Kv1.3/KCNA3. The polypeptide is Potassium channel toxin TtrKIK (Tityus trivittatus (Argentinean scorpion)).